The primary structure comprises 321 residues: Ribose-phosphate pyrophosphokinase (321 aa).

ATP is bound by residues 39–41 (DGE) and 98–99 (RQ). Residues His132 and Asp170 each coordinate Mg(2+). Lys195 is a catalytic residue. Residues Arg197, Asp221, and 225–229 (DTGGT) contribute to the D-ribose 5-phosphate site.

The protein belongs to the ribose-phosphate pyrophosphokinase family. Class I subfamily. In terms of assembly, homohexamer. Mg(2+) serves as cofactor.

The protein resides in the cytoplasm. The enzyme catalyses D-ribose 5-phosphate + ATP = 5-phospho-alpha-D-ribose 1-diphosphate + AMP + H(+). Its pathway is metabolic intermediate biosynthesis; 5-phospho-alpha-D-ribose 1-diphosphate biosynthesis; 5-phospho-alpha-D-ribose 1-diphosphate from D-ribose 5-phosphate (route I): step 1/1. Involved in the biosynthesis of the central metabolite phospho-alpha-D-ribosyl-1-pyrophosphate (PRPP) via the transfer of pyrophosphoryl group from ATP to 1-hydroxyl of ribose-5-phosphate (Rib-5-P). This Mycoplasmopsis pulmonis (strain UAB CTIP) (Mycoplasma pulmonis) protein is Ribose-phosphate pyrophosphokinase.